We begin with the raw amino-acid sequence, 772 residues long: Hyperosmolality-gated Ca2+ permeable channel 1.1 (772 aa).

The Extracellular portion of the chain corresponds to 1 to 5; sequence MATLK. Residues 6 to 28 traverse the membrane as a helical segment; it reads DIGVSAGINILTAFIFFIIFAFL. Residues 29 to 100 are Cytoplasmic-facing; that stretch reads RLQPFNDRVY…AGLDSVVYLR (72 aa). The helical transmembrane segment at 101-122 threads the bilayer; sequence IYWLGLKIFAPIAMLAWAVLVP. Topologically, residues 123-159 are extracellular; that stretch reads VNWTNNELELAKHFKNVTSSDIDKLTISNIPEGSNRF. Asn138 carries an N-linked (GlcNAc) asparagine glycan. Residues 160–180 traverse the membrane as a helical segment; the sequence is WAHIIMAYAFTIWTCYMLMKE. Residues 181–372 lie on the Cytoplasmic side of the membrane; the sequence is YETVANMRLQ…PNLAIPYVSL (192 aa). The cytoplasmic region required for homodimerization stretch occupies residues 339 to 344; that stretch reads QTTQTR. The helical transmembrane segment at 373–398 threads the bilayer; that stretch reads TVRRLVMNVAFFFLTFFFIIPIAFVQ. The Extracellular portion of the chain corresponds to 399 to 424; sequence SLATIEGIEKVAPFLKVIIEKDFIKS. The chain crosses the membrane as a helical span at residues 425 to 450; it reads LIQGLLAGIALKLFLIFLPAILMTMS. Residues 451–461 are Cytoplasmic-facing; that stretch reads KFEGFTSVSFL. The helical transmembrane segment at 462–485 threads the bilayer; sequence ERRSASRYYIFNLVNVFLGSVIAG. The Extracellular portion of the chain corresponds to 486–509; that stretch reads AAFEQLNSFLNQSPNQIPKTIGMA. Residues 510–538 traverse the membrane as a helical segment; sequence IPMKATFFITYIMVDGWAGVAGEILMLKP. Residues 539-566 are Cytoplasmic-facing; it reads LIIYHLKNAFLVKTEKDREEAMNPGSIG. A helical membrane pass occupies residues 567–587; that stretch reads FNTGEPQIQLYFLLGLVYAPV. Residue Thr588 is a topological domain, extracellular. Residues 589–606 form a helical membrane-spanning segment; the sequence is PMLLPFILVFFALAYVVY. Topologically, residues 607–624 are cytoplasmic; it reads RHQIINVYNQEYESAAAF. Residues 625-647 form a helical membrane-spanning segment; sequence WPDVHGRVITALIISQLLLMGLL. The Extracellular segment spans residues 648–653; sequence GTKHAA. A helical membrane pass occupies residues 654 to 674; it reads SAAPFLIALPVITIGFHRFCK. At 675-772 the chain is on the cytoplasmic side; sequence GRFEPAFVRY…SLAVINGKEV (98 aa). A cytoplasmic region required for homodimerization region spans residues 686–688; the sequence is LQE. Residues 743–772 are disordered; it reads KRQSRRNTPAPSRISGESSPSLAVINGKEV. Polar residues predominate over residues 748–763; the sequence is RNTPAPSRISGESSPS.

The protein belongs to the CSC1 (TC 1.A.17) family. As to quaternary structure, homodimer. Expressed in leaves, flowers, roots and guard cells.

It localises to the cell membrane. With respect to regulation, activated by mechanical pressure. Acts as a hyperosmolarity-gated non-selective cation channel that permeates Ca(2+) ions. Shows the following permeability sequence: K(+) &gt; Ba(2+) = Ca(2+) &gt; Na(+) = Mg(2+) = Cs(+). Mechanosensitive ion channel that converts mechanical stimuli into a flow of ions: activated in response to membrane stretch and poke. The sequence is that of Hyperosmolality-gated Ca2+ permeable channel 1.1 from Arabidopsis thaliana (Mouse-ear cress).